A 607-amino-acid polypeptide reads, in one-letter code: Branchpoint-bridging protein (607 aa).

Polar residues-rich tracts occupy residues 1 to 15 (MSWRNQGITGSNNIP) and 35 to 45 (VTPSAPSSVTN). Disordered regions lie at residues 1-92 (MSWR…TENK) and 134-155 (VPADGDRSPSPAPQYDNHGRRV). Basic and acidic residues predominate over residues 46–76 (GDRDRDRDGPVYSNDRDVKRGRSPERSEDGP). Residues 201-281 (YVPVNDYPEI…EKVNKAKKLI (81 aa)) enclose the KH domain. CCHC-type zinc fingers lie at residues 319 to 336 (QACQNCGQIGHRKYDCPE) and 344 to 361 (IICRVCGNAGHMARDCPD). Disordered stretches follow at residues 363-390 (QRGASWRNDGPGAGRTAGRIGSSGGGDA) and 407-607 (AAPA…PPGA). Positions 373-389 (PGAGRTAGRIGSSGGGD) are enriched in gly residues. Basic and acidic residues predominate over residues 472 to 500 (ARDRNERRHDDRDRGDSYYGGDRRHDDYG). The segment covering 521 to 533 (SAPAIPTAPAYPG) has biased composition (low complexity). Residues 534-545 (AYGGYPGYGAPP) show a composition bias toward gly residues. Pro residues-rich tracts occupy residues 550–563 (APPPGLPPPPPGAP) and 581–607 (APPPPPPAAEAPPPPPMDLPPPPPPGA).

Belongs to the BBP/SF1 family.

The protein resides in the nucleus. Functionally, necessary for the splicing of pre-mRNA. Has a role in the recognition of the branch site (5'-UACUAAC-3'), the pyrimidine tract and the 3'-splice site at the 3'-end of introns. This chain is Branchpoint-bridging protein (bbp-1), found in Neurospora crassa (strain ATCC 24698 / 74-OR23-1A / CBS 708.71 / DSM 1257 / FGSC 987).